We begin with the raw amino-acid sequence, 241 residues long: 1-(5-phosphoribosyl)-5-[(5-phosphoribosylamino)methylideneamino] imidazole-4-carboxamide isomerase (241 aa).

D8 (proton acceptor) is an active-site residue. The active-site Proton donor is the D129.

This sequence belongs to the HisA/HisF family.

Its subcellular location is the cytoplasm. It carries out the reaction 1-(5-phospho-beta-D-ribosyl)-5-[(5-phospho-beta-D-ribosylamino)methylideneamino]imidazole-4-carboxamide = 5-[(5-phospho-1-deoxy-D-ribulos-1-ylimino)methylamino]-1-(5-phospho-beta-D-ribosyl)imidazole-4-carboxamide. Its pathway is amino-acid biosynthesis; L-histidine biosynthesis; L-histidine from 5-phospho-alpha-D-ribose 1-diphosphate: step 4/9. In Chloroflexus aurantiacus (strain ATCC 29364 / DSM 637 / Y-400-fl), this protein is 1-(5-phosphoribosyl)-5-[(5-phosphoribosylamino)methylideneamino] imidazole-4-carboxamide isomerase.